A 311-amino-acid chain; its full sequence is Protein translocase subunit SecF (311 aa).

6 helical membrane-spanning segments follow: residues 23–42, 140–160, 164–184, 194–214, 246–266, and 272–292; these read VSYS…ISIY, IEAG…YIGV, WYFG…ALGF, LSTI…SVVI, ILTV…GGKA, and VLVF…SAPI.

This sequence belongs to the SecD/SecF family. SecF subfamily. In terms of assembly, forms a complex with SecD. Part of the essential Sec protein translocation apparatus which comprises SecA, SecYEG and auxiliary proteins SecDF-YajC and YidC.

It localises to the cell inner membrane. In terms of biological role, part of the Sec protein translocase complex. Interacts with the SecYEG preprotein conducting channel. SecDF uses the proton motive force (PMF) to complete protein translocation after the ATP-dependent function of SecA. The polypeptide is Protein translocase subunit SecF (Rickettsia prowazekii (strain Madrid E)).